We begin with the raw amino-acid sequence, 63 residues long: Large ribosomal subunit protein bL28 (63 aa).

Belongs to the bacterial ribosomal protein bL28 family.

In Pelobacter propionicus (strain DSM 2379 / NBRC 103807 / OttBd1), this protein is Large ribosomal subunit protein bL28.